A 603-amino-acid chain; its full sequence is MAATAVAAGTGSPAGTESAEGGPGAAAALELWLNKATDPSMAEQDWSAIQKFCEQVNTDPSGPTHAPWLLAHKIQSPQEKEALYALTVLEICMNHCGEKFHSEVAKFRFLNELIKVLSPKYLGAWATEKVKGRVIEILFSWTVWFPEDIKIRDAYQMLKKQGIIKQDPKLPMDKILPPPSPWPKSIFDADEEKSKLLTRLLKSNHPEDLQAANRLIKNLVKEEQEKSEKVSRRVSAVEEVRSHVRVLREMLSMYRRPGHALPDQQALQVVYERCEKLRPTLFRLASDTTDDDDALAEILQANDLLTQGVRLYKQVVEGRVSAGNAVPAAVGAIPAPRAFPNPEPCGLNCPLIDLETPSLLHQDLAALGINDVPTRNQVVIPSCCNDKKQPGAITLMGGGIQSLSADRNLLDLFSPQPSPGLNYVPQKSIPKEVPPGTKASPGWSWEAGPLASSTASQNTPLAHVFVPLESVKPSSLPPIVVYDRNGFRILLHFSQTGAPGHPDVKVLLLTMMSTATQPVWDVMFQVAVPKSMRVKLQPASSSKLPAFSPLMPPAVISQTLLLDNPHKEPIRLRYKLTFNQGGQPFSEVGEVKDFPDLAVLSTA.

The segment at 1–22 (MAATAVAAGTGSPAGTESAEGG) is disordered. Low complexity predominate over residues 13-22 (PAGTESAEGG). One can recognise a VHS domain in the interval 36 to 166 (ATDPSMAEQD…MLKKQGIIKQ (131 aa)). The GAT domain occupies 190–317 (DEEKSKLLTR…GVRLYKQVVE (128 aa)). The unstructured hinge stretch occupies residues 318–473 (GRVSAGNAVP…VFVPLESVKP (156 aa)). In terms of domain architecture, GAE spans 474-595 (SSLPPIVVYD…SEVGEVKDFP (122 aa)).

Belongs to the GGA protein family. As to quaternary structure, monomer. Interacts with NECAP1, TSG101, UBC and AFTPH/aftiphilin. Interacts with CNST. Interacts with GGA1 and GGA3. Binds to clathrin and activated ARFs, such as ARF1, ARF5 and ARF6. Binds RABEP1 and RABGEF1. Interacts with the type-I membrane proteins LRP3, M6PR/CD-MPR, IGF2R/CI-MPR and BACE1. Interacts (via N-terminal VHS domain) with SORL1/sorLA and SORT1 (via C-terminal cytosolic domain). Binds the accessory proteins CCDC91, P200, SYNRG, EPN4 and NECAP2. Interacts with ADRA2B. Interacts (via VHS domain) with PIK4B; the interaction is important for PIK4B location at the Golgi apparatus membrane. Post-translationally, ubiquitinated.

The protein localises to the golgi apparatus. It localises to the trans-Golgi network membrane. The protein resides in the endosome membrane. It is found in the early endosome membrane. Plays a role in protein sorting and trafficking between the trans-Golgi network (TGN) and endosomes. Mediates the ARF-dependent recruitment of clathrin to the TGN and binds ubiquitinated proteins and membrane cargo molecules with a cytosolic acidic cluster-dileucine (DXXLL) motif. Mediates export of the GPCR receptor ADRA2B to the cell surface. Regulates retrograde transport of phosphorylated form of BACE1 from endosomes to the trans-Golgi network. This is ADP-ribosylation factor-binding protein GGA2 (Gga2) from Mus musculus (Mouse).